A 217-amino-acid chain; its full sequence is 3,4-dihydroxy-2-butanone 4-phosphate synthase (217 aa).

Residues 37-38, D42, 150-154, and E174 contribute to the D-ribulose 5-phosphate site; these read RE and RGGHT. A Mg(2+)-binding site is contributed by E38. H153 provides a ligand contact to Mg(2+).

This sequence belongs to the DHBP synthase family. In terms of assembly, homodimer. Mg(2+) serves as cofactor. Mn(2+) is required as a cofactor.

The enzyme catalyses D-ribulose 5-phosphate = (2S)-2-hydroxy-3-oxobutyl phosphate + formate + H(+). It participates in cofactor biosynthesis; riboflavin biosynthesis; 2-hydroxy-3-oxobutyl phosphate from D-ribulose 5-phosphate: step 1/1. Catalyzes the conversion of D-ribulose 5-phosphate to formate and 3,4-dihydroxy-2-butanone 4-phosphate. The polypeptide is 3,4-dihydroxy-2-butanone 4-phosphate synthase (Salmonella arizonae (strain ATCC BAA-731 / CDC346-86 / RSK2980)).